A 92-amino-acid polypeptide reads, in one-letter code: Large ribosomal subunit protein eL43 (92 aa).

The C4-type zinc finger occupies 39–60 (CSFCGKKTVRRGAAGIWSCHSC).

This sequence belongs to the eukaryotic ribosomal protein eL43 family.

This is Large ribosomal subunit protein eL43 (RPL43) from Candida glabrata (strain ATCC 2001 / BCRC 20586 / JCM 3761 / NBRC 0622 / NRRL Y-65 / CBS 138) (Yeast).